Consider the following 1551-residue polypeptide: Serine/threonine-protein kinase MRCK gamma (1551 aa).

Positions 71-337 (FEILKVIGRG…LDDFRNHPFF (267 aa)) constitute a Protein kinase domain. ATP is bound by residues 77–85 (IGRGAFGEV) and Lys100. Catalysis depends on Asp195, which acts as the Proton acceptor. Ser216 and Ser228 each carry phosphoserine; by autocatalysis. Thr234 is modified (phosphothreonine; by autocatalysis). The region spanning 338–408 (EGVDWERLAS…TSGSHSPESS (71 aa)) is the AGC-kinase C-terminal domain. 2 coiled-coil regions span residues 406-678 (ESSS…SNWE) and 730-802 (KARR…RARG). Disordered stretches follow at residues 467–486 (KASL…QDSD), 655–675 (ELAQ…ETES), 801–849 (RGPV…PEGR), and 863–886 (TANT…PRSF). The segment covering 655-674 (ELAQEQESKQRLEGERRETE) has biased composition (basic and acidic residues). Residues 835–849 (ATRHGGEPDLRPEGR) are compositionally biased toward basic and acidic residues. Residues 878–927 (SHTLRPRSFPSPTKCLRCTSLMLGLGRQGLGCDACGYFCHTTCAPQAPPC) form a Phorbol-ester/DAG-type zinc finger. The region spanning 947–1066 (GTAYEGFLSV…WLQVLGELQR (120 aa)) is the PH domain. Positions 1092 to 1366 (LPHTLCAAIL…RPLNPEGSLF (275 aa)) constitute a CNH domain. Positions 1437–1450 (ISPPTNFNHLVHVG) constitute a CRIB domain. The disordered stretch occupies residues 1442-1551 (NFNHLVHVGP…PLSPELESSP (110 aa)). A compositionally biased stretch (basic and acidic residues) spans 1457-1470 (GARDKSPAPEEKGR). Position 1482 is a phosphoserine (Ser1482). The segment covering 1511 to 1533 (TSLSSESVSCPQGSLSPATSLMQ) has biased composition (polar residues). Low complexity predominate over residues 1540-1551 (SLPLSPELESSP).

This sequence belongs to the protein kinase superfamily. AGC Ser/Thr protein kinase family. DMPK subfamily. In terms of assembly, homodimer and homotetramer via the coiled coil regions. Interacts tightly with GTP-bound but not GDP-bound CDC42. It depends on Mg(2+) as a cofactor. In terms of tissue distribution, expressed in heart and skeletal muscle.

Its subcellular location is the cytoplasm. The catalysed reaction is L-seryl-[protein] + ATP = O-phospho-L-seryl-[protein] + ADP + H(+). It catalyses the reaction L-threonyl-[protein] + ATP = O-phospho-L-threonyl-[protein] + ADP + H(+). Its activity is regulated as follows. Maintained in an inactive, closed conformation by an interaction between the kinase domain and the negative autoregulatory C-terminal coiled-coil region. Agonist binding to the phorbol ester binding site disrupts this, releasing the kinase domain to allow N-terminus-mediated dimerization and kinase activation by transautophosphorylation. Functionally, may act as a downstream effector of CDC42 in cytoskeletal reorganization. Contributes to the actomyosin contractility required for cell invasion, through the regulation of MYPT1 and thus MLC2 phosphorylation. The chain is Serine/threonine-protein kinase MRCK gamma from Homo sapiens (Human).